Reading from the N-terminus, the 520-residue chain is Tetratricopeptide repeat protein 6 (520 aa).

13 TPR repeats span residues 57 to 90 (MTMC…ISHS), 101 to 138 (ADCL…DKNS), 139 to 172 (YTAF…DATE), 176 to 209 (LNTF…SRTN), 210 to 243 (GSLC…NPCF), 245 to 280 (DAYV…NPAY), 281 to 314 (IKAR…DPKN), 320 to 347 (GRAV…ISTT), 348 to 381 (AEFL…NPKY), 382 to 415 (SLAY…DPEN), 416 to 449 (EYVL…CPFW), 450 to 483 (AAVY…KPND), and 484 to 517 (ALVY…EDYA).

This Homo sapiens (Human) protein is Tetratricopeptide repeat protein 6.